The primary structure comprises 90 residues: Potassium channel toxin BmTXK-beta (90 aa).

The signal sequence occupies residues 1-22; it reads MMKQQFFLFLAVIVMISSVIEA. A propeptide spanning residues 23-29 is cleaved from the precursor; that stretch reads GRGKEIM. One can recognise a BetaSPN-type CS-alpha/beta domain in the interval 55–90; that stretch reads EYACPVIEKWCEDHCAAKKAIGKCEDTECKCLKLRK. 3 disulfide bridges follow: Cys58–Cys78, Cys65–Cys83, and Cys69–Cys85.

This sequence belongs to the long chain scorpion toxin family. Class 2 subfamily. As to expression, expressed by the venom gland.

Its subcellular location is the secreted. Functionally, this recombinant peptide reversibly and dose-dependently inhibits the transient outward potassium current (I(To)) of rabbit atrial myocyte and prolongs the action potential duration of rabbit atrial myocyte without affecting the action potential amplitude. Thus, the voltage-gated potassium channels Kv4.1/KCND1, Kv4.2/KCND2, Kv4.3/KCND3 may be the target of this toxin. The protein is Potassium channel toxin BmTXK-beta of Olivierus martensii (Manchurian scorpion).